A 414-amino-acid polypeptide reads, in one-letter code: 4-hydroxy-3-methylbut-2-en-1-yl diphosphate synthase (flavodoxin) (414 aa).

Cys-304, Cys-307, Cys-350, and Glu-357 together coordinate [4Fe-4S] cluster.

Belongs to the IspG family. It depends on [4Fe-4S] cluster as a cofactor.

The enzyme catalyses (2E)-4-hydroxy-3-methylbut-2-enyl diphosphate + oxidized [flavodoxin] + H2O + 2 H(+) = 2-C-methyl-D-erythritol 2,4-cyclic diphosphate + reduced [flavodoxin]. Its pathway is isoprenoid biosynthesis; isopentenyl diphosphate biosynthesis via DXP pathway; isopentenyl diphosphate from 1-deoxy-D-xylulose 5-phosphate: step 5/6. Converts 2C-methyl-D-erythritol 2,4-cyclodiphosphate (ME-2,4cPP) into 1-hydroxy-2-methyl-2-(E)-butenyl 4-diphosphate. In Aromatoleum aromaticum (strain DSM 19018 / LMG 30748 / EbN1) (Azoarcus sp. (strain EbN1)), this protein is 4-hydroxy-3-methylbut-2-en-1-yl diphosphate synthase (flavodoxin).